A 292-amino-acid polypeptide reads, in one-letter code: ATP synthase gamma chain (292 aa).

Belongs to the ATPase gamma chain family. In terms of assembly, F-type ATPases have 2 components, CF(1) - the catalytic core - and CF(0) - the membrane proton channel. CF(1) has five subunits: alpha(3), beta(3), gamma(1), delta(1), epsilon(1). CF(0) has three main subunits: a, b and c.

It localises to the cell inner membrane. Functionally, produces ATP from ADP in the presence of a proton gradient across the membrane. The gamma chain is believed to be important in regulating ATPase activity and the flow of protons through the CF(0) complex. This chain is ATP synthase gamma chain, found in Magnetococcus marinus (strain ATCC BAA-1437 / JCM 17883 / MC-1).